A 154-amino-acid chain; its full sequence is Ribonuclease H (154 aa).

Positions M1–S142 constitute an RNase H type-1 domain. Mg(2+) contacts are provided by D10, E48, D70, and D134. The segment at C133–P154 is disordered.

This sequence belongs to the RNase H family. Monomer. Requires Mg(2+) as cofactor.

The protein resides in the cytoplasm. The catalysed reaction is Endonucleolytic cleavage to 5'-phosphomonoester.. In terms of biological role, endonuclease that specifically degrades the RNA of RNA-DNA hybrids. The protein is Ribonuclease H of Aeromonas hydrophila subsp. hydrophila (strain ATCC 7966 / DSM 30187 / BCRC 13018 / CCUG 14551 / JCM 1027 / KCTC 2358 / NCIMB 9240 / NCTC 8049).